The primary structure comprises 782 residues: MAKQGKNKVSKPRKPPTLKQKLKKESKVVKAKDLQWKLVDIPDNLGDYEGFYGLEEIDGVDVQIVNGKAEFIVRDNGKVENKSKKEETNENGENNMDVEDNETPEVEDEKPTEQEEEEEEEEEEEEEEEEEEEEEEFAGFEDDENNQEDANTSERVSNNDKDDKLAESNDELNAVSFANLDLPLPDDNEINLPNWQEGDLGSSISAYTLYGLSQLDFKKPTPIQKETIPIALSGKDVIGKATTGSGKTLAYGIPILEKYIQSLNLIKQNNKDKKINHPTGIIFAPTRELAHQVVDHLNKLAKYSPLSTRGIVSITGGLSIQKQQRLLRHGPGIIVATPGRMLELVQGDSELAKRLASIDIIVLDEADRLLQDGHFDEFEKILELFGKNRPKSKSIEWKWQTLVFSATFSRDLFRKLDRHQKGKSSSLMGNDEIVQLLNEKLKFKDKKPTLVDANPKEIVSGQITEALVECGPTERDLYLYYFLLMYKGSTLVFANSIDSVKRLVPLLNNLNIPAFSIHSSMIQKQRLRALEKFKEASQKNEVAVLVASDVAARGLDIPNIDHVVHYHLPRSADVYIHRSGRTARAGKEGVSVMFCSPQEASGPLRKLRRLVAGNSNKESRLNMHNDVKLLPIEMDLVSQIKPRVEISSKLADASISSTATRKEDSWVKQAAEDLGLDDLSGLEDFEDDIIKKQRKRKEGKMLSKDETKALKYELKTLLANPIKKNTRKSYITSGLQNLAHQMVTGAHHDDVLGHEKVNALSDLKGSKNKNKKIEKKRISKKK.

A compositionally biased stretch (basic residues) spans 1–22 (MAKQGKNKVSKPRKPPTLKQKL). 2 disordered regions span residues 1-24 (MAKQGKNKVSKPRKPPTLKQKLKK) and 71-164 (FIVR…KDDK). Residues 71–88 (FIVRDNGKVENKSKKEET) show a composition bias toward basic and acidic residues. Over residues 96–147 (MDVEDNETPEVEDEKPTEQEEEEEEEEEEEEEEEEEEEEEEFAGFEDDENNQ) the composition is skewed to acidic residues. A Q motif motif is present at residues 197-225 (EGDLGSSISAYTLYGLSQLDFKKPTPIQK). Positions 228 to 426 (IPIALSGKDV…DRHQKGKSSS (199 aa)) constitute a Helicase ATP-binding domain. 241-248 (ATTGSGKT) provides a ligand contact to ATP. Residues 364–367 (DEAD) carry the DEAD box motif. The Helicase C-terminal domain occupies 478 to 635 (YLYYFLLMYK…DVKLLPIEMD (158 aa)). The tract at residues 762–782 (DLKGSKNKNKKIEKKRISKKK) is disordered. The span at 766–782 (SKNKNKKIEKKRISKKK) shows a compositional bias: basic residues.

The protein belongs to the DEAD box helicase family. DDX24/MAK5 subfamily.

Its subcellular location is the nucleus. It localises to the nucleolus. The enzyme catalyses ATP + H2O = ADP + phosphate + H(+). In terms of biological role, ATP-binding RNA helicase involved in the biogenesis of 60S ribosomal subunits and is required for the normal formation of 25S and 5.8S rRNAs. The polypeptide is ATP-dependent RNA helicase MAK5 (MAK5) (Candida albicans (strain SC5314 / ATCC MYA-2876) (Yeast)).